The primary structure comprises 292 residues: ATP synthase gamma chain (292 aa).

This sequence belongs to the ATPase gamma chain family. As to quaternary structure, F-type ATPases have 2 components, CF(1) - the catalytic core - and CF(0) - the membrane proton channel. CF(1) has five subunits: alpha(3), beta(3), gamma(1), delta(1), epsilon(1). CF(0) has three main subunits: a, b and c.

The protein localises to the cell membrane. Functionally, produces ATP from ADP in the presence of a proton gradient across the membrane. The gamma chain is believed to be important in regulating ATPase activity and the flow of protons through the CF(0) complex. In Streptococcus thermophilus (strain CNRZ 1066), this protein is ATP synthase gamma chain.